The primary structure comprises 103 residues: Small ribosomal subunit protein uS10 (103 aa).

The protein belongs to the universal ribosomal protein uS10 family. In terms of assembly, part of the 30S ribosomal subunit.

Functionally, involved in the binding of tRNA to the ribosomes. In Leptothrix cholodnii (strain ATCC 51168 / LMG 8142 / SP-6) (Leptothrix discophora (strain SP-6)), this protein is Small ribosomal subunit protein uS10.